We begin with the raw amino-acid sequence, 76 residues long: Omega-scoloptoxin(15)-Ssd3c (76 aa).

The signal sequence occupies residues 1 to 23 (MEKKIIFLVVLVALLALPEFISS).

This sequence belongs to the scoloptoxin-15 family. Contains 2 disulfide bonds. Expressed by the venom gland.

The protein resides in the secreted. In terms of biological role, voltage-gated calcium channel inhibitor (Cav) (8.6% block at 10 nM), when tested on DRG neurons. The protein is Omega-scoloptoxin(15)-Ssd3c of Scolopendra dehaani (Thai centipede).